We begin with the raw amino-acid sequence, 247 residues long: MTILFLTMVISYFGCMKAAPMKEANARGQGSLAYPAVRTHGTLESVNGPKAGSRGLTSLADTFEHVIEDLLDEGQKVRPDEENSKDADLYTSRVMLSSQVPLEPPLLFLLEEYKNYLDAANMSMRVRRHSDPARRGELSVCDSISEWVTAADKKTAVDMSGGTVTVLEKVPVSKGQLKQYFYETKCNPMGYTKEGCRGIDKRHWNSQCRTTQSYVRALTMDSKKRIGWRFIRIDTSCVCTLTIKRGR.

The first 18 residues, 1–18, serve as a signal peptide directing secretion; sequence MTILFLTMVISYFGCMKA. Residues 19–128 constitute a propeptide that is removed on maturation; it reads APMKEANARG…AANMSMRVRR (110 aa). N-linked (GlcNAc...) asparagine glycosylation is present at Asn-121. Disulfide bonds link Cys-141/Cys-208, Cys-186/Cys-237, and Cys-196/Cys-239.

It belongs to the NGF-beta family. In terms of assembly, monomers and homodimers. Binds to NTRK2/TRKB. Can form heterodimers with other neurotrophin family members, such as NTF3 and NTF4 (in vitro), but the physiological relevance of this is not clear. BDNF precursor form: interacts with the heterodimer formed by NGFR and SORCS2. Mature BDNF has much lower affinity for the heterodimer formed by NGFR and SORCS2. In terms of processing, N-glycosylated and glycosulfated, contrary to mature BDNF. Mature BDNF is produced by proteolytic removal of the propeptide, catalyzed by a FURIN family member. In addition, the precursor form is proteolytically cleaved within the propeptide, but this is not an obligatory intermediate for the production of mature BDNF. Can be converted into mature BDNF by plasmin (PLG).

The protein resides in the secreted. Its function is as follows. Important signaling molecule that activates signaling cascades downstream of NTRK2. During development, promotes the survival and differentiation of selected neuronal populations of the peripheral and central nervous systems. Participates in axonal growth, pathfinding and in the modulation of dendritic growth and morphology. Major regulator of synaptic transmission and plasticity at adult synapses in many regions of the CNS. The versatility of BDNF is emphasized by its contribution to a range of adaptive neuronal responses including long-term potentiation (LTP), long-term depression (LTD), certain forms of short-term synaptic plasticity, as well as homeostatic regulation of intrinsic neuronal excitability. Important signaling molecule that activates signaling cascades downstream of NTRK2. Activates signaling cascades via the heterodimeric receptor formed by NGFR and SORCS2. Signaling via NGFR and SORCS2 plays a role in synaptic plasticity and long-term depression (LTD). Binding to NGFR and SORCS2 promotes neuronal apoptosis. Promotes neuronal growth cone collapse. The chain is Neurotrophic factor BDNF precursor form (BDNF) from Equus caballus (Horse).